A 175-amino-acid polypeptide reads, in one-letter code: ATP synthase subunit delta (175 aa).

Belongs to the ATPase delta chain family. As to quaternary structure, F-type ATPases have 2 components, F(1) - the catalytic core - and F(0) - the membrane proton channel. F(1) has five subunits: alpha(3), beta(3), gamma(1), delta(1), epsilon(1). F(0) has three main subunits: a(1), b(2) and c(10-14). The alpha and beta chains form an alternating ring which encloses part of the gamma chain. F(1) is attached to F(0) by a central stalk formed by the gamma and epsilon chains, while a peripheral stalk is formed by the delta and b chains.

It localises to the cell membrane. Functionally, f(1)F(0) ATP synthase produces ATP from ADP in the presence of a proton or sodium gradient. F-type ATPases consist of two structural domains, F(1) containing the extramembraneous catalytic core and F(0) containing the membrane proton channel, linked together by a central stalk and a peripheral stalk. During catalysis, ATP synthesis in the catalytic domain of F(1) is coupled via a rotary mechanism of the central stalk subunits to proton translocation. Its function is as follows. This protein is part of the stalk that links CF(0) to CF(1). It either transmits conformational changes from CF(0) to CF(1) or is implicated in proton conduction. This chain is ATP synthase subunit delta, found in Stenotrophomonas maltophilia (strain K279a).